The primary structure comprises 645 residues: Zinc finger protein 64 (645 aa).

C2H2-type zinc fingers lie at residues H175 to H197, Y203 to H225, and F231 to H253. E286 is covalently cross-linked (Glycyl lysine isopeptide (Lys-Gly) (interchain with G-Cter in SUMO2)). A C2H2-type 4; atypical zinc finger spans residues F299–H324. C2H2-type zinc fingers lie at residues H330–H352, H358–H380, Y386–H408, F414–H436, F442–H465, F467–H489, E495–H517, F523–H546, and F580–H602. A Glycyl lysine isopeptide (Lys-Gly) (interchain with G-Cter in SUMO2) cross-link involves residue N397. 2 stretches are compositionally biased toward basic and acidic residues: residues D543–N554 and K600–N610. Disordered stretches follow at residues D543–S567 and K600–L645. The residue at position 545 (V545) is a Phosphoserine. Positions A622–S631 are enriched in polar residues.

It belongs to the krueppel C2H2-type zinc-finger protein family. As to quaternary structure, interacts with ZNF70; this interaction promote the transactivation of the HES1 gene. Interacts with NOTCH1.

The protein resides in the nucleus. May be involved in the regulation of mesenchymal cell differentiation through transactivation of NOTCH1 target genes. This chain is Zinc finger protein 64, found in Homo sapiens (Human).